A 553-amino-acid polypeptide reads, in one-letter code: Heterochromatin protein 1-binding protein 3 (553 aa).

Position 2 is an N-acetylalanine (Ala2). Ser6 is subject to Phosphoserine. 2 disordered regions span residues 29–134 (KLGE…KTIP) and 140–159 (SASQ…SPRP). A Phosphothreonine modification is found at Thr51. Positions 60 to 71 (GEEEKPEPDISS) are enriched in acidic residues. A Glycyl lysine isopeptide (Lys-Gly) (interchain with G-Cter in SUMO2) cross-link involves residue Lys64. Residue Thr85 is modified to Phosphothreonine. A compositionally biased stretch (basic and acidic residues) spans 94-127 (EQPKGEPENEEKEENKSSEETKKDEKDQSKEKEK). A Glycyl lysine isopeptide (Lys-Gly) (interchain with G-Cter in SUMO2) cross-link involves residue Lys97. Residues 140–154 (SASQLARAQKQTPMA) are compositionally biased toward polar residues. Phosphoserine is present on residues Ser142, Ser155, and Ser156. Positions 157–232 (PRPKMDAILT…GASGSFVVVQ (76 aa)) constitute an H15 1 domain. Lys190 bears the N6-acetyllysine mark. Residues 230–255 (VVQKSRKTPQKSRNRKNRSSAVDPEP) form a disordered region. Residues 233-247 (KSRKTPQKSRNRKNR) show a composition bias toward basic residues. Residues Ser248 and Ser249 each carry the phosphoserine modification. The PxVxL motif signature appears at 255-259 (PQVKL). 2 consecutive H15 domains span residues 255 to 330 (PQVK…QLKK) and 337 to 413 (LGGS…QLCF). Residue Lys258 forms a Glycyl lysine isopeptide (Lys-Gly) (interchain with G-Cter in SUMO2) linkage. The segment at 422-553 (LFPKKEPDDS…TMKKSFRVKK (132 aa)) is disordered. Acidic residues predominate over residues 430-450 (DSRDEDEDEDESSEEDSEDEE). A phosphoserine mark is found at Ser441, Ser442, and Ser446. Residues 489 to 510 (GKARPLPKKAPPKAKTPAKKTR) are compositionally biased toward basic residues. The segment covering 517–527 (KKPSGGSSKKP) has biased composition (low complexity). A compositionally biased stretch (basic residues) spans 543–553 (STMKKSFRVKK).

As to quaternary structure, interacts (via PxVxL motif) with CBX5 (via Trp-174).

Its subcellular location is the nucleus. It localises to the chromosome. In terms of biological role, component of heterochromatin that maintains heterochromatin integrity during G1/S progression and regulates the duration of G1 phase to critically influence cell proliferative capacity. Mediates chromatin condensation during hypoxia, leading to increased tumor cell viability, radio-resistance, chemo-resistance and self-renewal. This Homo sapiens (Human) protein is Heterochromatin protein 1-binding protein 3 (HP1BP3).